The chain runs to 208 residues: Small ribosomal subunit protein uS4 (208 aa).

Residues 98 to 161 (QRLDNVVYRM…KTNPQIVRAI (64 aa)) form the S4 RNA-binding domain.

The protein belongs to the universal ribosomal protein uS4 family. In terms of assembly, part of the 30S ribosomal subunit. Contacts protein S5. The interaction surface between S4 and S5 is involved in control of translational fidelity.

Its function is as follows. One of the primary rRNA binding proteins, it binds directly to 16S rRNA where it nucleates assembly of the body of the 30S subunit. Functionally, with S5 and S12 plays an important role in translational accuracy. This is Small ribosomal subunit protein uS4 from Campylobacter fetus subsp. fetus (strain 82-40).